The chain runs to 205 residues: Large ribosomal subunit protein uL3 (205 aa).

It belongs to the universal ribosomal protein uL3 family. Part of the 50S ribosomal subunit. Forms a cluster with proteins L14 and L19.

One of the primary rRNA binding proteins, it binds directly near the 3'-end of the 23S rRNA, where it nucleates assembly of the 50S subunit. This chain is Large ribosomal subunit protein uL3, found in Bacteroides thetaiotaomicron (strain ATCC 29148 / DSM 2079 / JCM 5827 / CCUG 10774 / NCTC 10582 / VPI-5482 / E50).